Here is a 205-residue protein sequence, read N- to C-terminus: MSKRESSKYKIDRRMGENIWGRPKSPVNRREYGPGQHGQRRKGKLSDFGVQLRAKQKLKGYYGDLREKQFRATFDEANRRKGDTSENLIGLLESRLDAIVYRAKFVPTVFAARQFVNHGHVTVNGVRVNIGSYRCKAGDVIEVREKSKQLVIVLESVSLAERDVPDYIEVDHNKMVATFARVPTLADVPYAVVMEPQLVVEFYSR.

The segment covering 1-16 (MSKRESSKYKIDRRMG) has biased composition (basic and acidic residues). A disordered region spans residues 1–46 (MSKRESSKYKIDRRMGENIWGRPKSPVNRREYGPGQHGQRRKGKLS). The 64-residue stretch at 94–157 (SRLDAIVYRA…KQLVIVLESV (64 aa)) folds into the S4 RNA-binding domain.

This sequence belongs to the universal ribosomal protein uS4 family. In terms of assembly, part of the 30S ribosomal subunit. Contacts protein S5. The interaction surface between S4 and S5 is involved in control of translational fidelity.

One of the primary rRNA binding proteins, it binds directly to 16S rRNA where it nucleates assembly of the body of the 30S subunit. Its function is as follows. With S5 and S12 plays an important role in translational accuracy. In Rhizobium rhizogenes (strain K84 / ATCC BAA-868) (Agrobacterium radiobacter), this protein is Small ribosomal subunit protein uS4.